We begin with the raw amino-acid sequence, 339 residues long: Dihydroorotate dehydrogenase (quinone) (339 aa).

Residues 62 to 66 (AGMDK) and Thr86 each bind FMN. A substrate-binding site is contributed by Lys66. Substrate is bound at residue 111–115 (NRMGF). FMN is bound by residues Asn139 and Asn172. Asn172 lines the substrate pocket. Ser175 functions as the Nucleophile in the catalytic mechanism. Substrate is bound at residue Asn177. The FMN site is built by Lys217 and Thr245. 246–247 (NT) contacts substrate. FMN is bound by residues Gly268, Gly297, and 318–319 (YS).

Belongs to the dihydroorotate dehydrogenase family. Type 2 subfamily. Monomer. FMN serves as cofactor.

It localises to the cell membrane. It carries out the reaction (S)-dihydroorotate + a quinone = orotate + a quinol. Its pathway is pyrimidine metabolism; UMP biosynthesis via de novo pathway; orotate from (S)-dihydroorotate (quinone route): step 1/1. In terms of biological role, catalyzes the conversion of dihydroorotate to orotate with quinone as electron acceptor. This chain is Dihydroorotate dehydrogenase (quinone), found in Shewanella sp. (strain MR-4).